We begin with the raw amino-acid sequence, 206 residues long: Large ribosomal subunit protein uL4 (206 aa).

Residues 63-98 (MYRQKGTGRARHSSARAPQFRGGGKAHGPVPHSHAH) form a disordered region. The span at 64-76 (YRQKGTGRARHSS) shows a compositional bias: basic residues.

Belongs to the universal ribosomal protein uL4 family. In terms of assembly, part of the 50S ribosomal subunit.

Functionally, one of the primary rRNA binding proteins, this protein initially binds near the 5'-end of the 23S rRNA. It is important during the early stages of 50S assembly. It makes multiple contacts with different domains of the 23S rRNA in the assembled 50S subunit and ribosome. In terms of biological role, forms part of the polypeptide exit tunnel. This is Large ribosomal subunit protein uL4 from Chelativorans sp. (strain BNC1).